A 514-amino-acid chain; its full sequence is Cholesterol side-chain cleavage enzyme, mitochondrial (514 aa).

Residues 1-39 (MMVSWSVCRSSLALPACGLPSARHNSSMPVVRQALSPDN) constitute a mitochondrion transit peptide. Cys458 provides a ligand contact to heme.

Belongs to the cytochrome P450 family. Heme is required as a cofactor. As to expression, in the ovary, not found in early vitellogenic follicles, barely detected in postvitellogenic follicles and abundant in post-ovulatory follicles.

The protein localises to the mitochondrion inner membrane. The enzyme catalyses 6 reduced [adrenodoxin] + cholesterol + 3 O2 + 6 H(+) = 4-methylpentanal + pregnenolone + 6 oxidized [adrenodoxin] + 4 H2O. Its pathway is lipid metabolism; C21-steroid hormone metabolism. In terms of biological role, catalyzes the side-chain cleavage reaction of cholesterol to pregnenolone, the precursor of most steroid hormones. The chain is Cholesterol side-chain cleavage enzyme, mitochondrial (cyp11a1) from Oncorhynchus mykiss (Rainbow trout).